The sequence spans 246 residues: Small ribosomal subunit protein uS2 (246 aa).

Belongs to the universal ribosomal protein uS2 family.

The protein is Small ribosomal subunit protein uS2 of Pseudomonas paraeruginosa (strain DSM 24068 / PA7) (Pseudomonas aeruginosa (strain PA7)).